An 894-amino-acid polypeptide reads, in one-letter code: E3 ubiquitin-protein ligase SH3RF1 (894 aa).

The segment at 12–53 (CPVCLERLDASAKVLPCQHTFCKRCLLGIVGSRNELRCPECR) adopts an RING-type zinc-finger fold. 2 SH3 domains span residues 134-193 (PQLP…IIKP) and 196-259 (QPPP…FNSA). The segment at 274–323 (VDTAECPSATAAQSSSASKHSDTKKNTRKRHSFTSLTMANKSSQASQNRH) is disordered. Low complexity predominate over residues 281–291 (SATAAQSSSAS). An interaction with RAC1 region spans residues 293–363 (HSDTKKNTRK…APSQVHISTT (71 aa)). The residue at position 305 (Ser305) is a Phosphoserine. A compositionally biased stretch (polar residues) spans 306–322 (FTSLTMANKSSQASQNR). Residues 448-551 (HLRPQTRPSV…STAGGPAQKP (104 aa)) are interaction with AKT2. The region spanning 453-514 (TRPSVYVAIY…PGNYVAPVTR (62 aa)) is the SH3 3 domain. 2 disordered regions span residues 526–556 (MSTA…GNGV) and 682–751 (LETE…PTLD). Ser540 carries the post-translational modification Phosphoserine. The span at 700-713 (SPESAASACGNSSA) shows a compositional bias: polar residues. A compositionally biased stretch (basic and acidic residues) spans 715–726 (KPDKDSKKEKKG). Ser743 carries the phosphoserine modification. The SH3 4 domain occupies 835–894 (VVCERHRVVVSYPPQSEAELELKEGDIVFVHKKREDGWFKGTLQRNGKTGLFPGSFVENI).

The protein belongs to the SH3RF family. As to quaternary structure, interacts with HERP1. Interacts with RAC1; in a GTP-dependent manner. Interacts with MAP3K10/MLK2 and MAP3K11/MLK3. Interacts with MAPK8IP; this interaction leads to the PJAC complex (POSH-JIP or SH3RF1/MAPK8IP apoptotic complex) with a 1:1 ratio. Interacts with SIAH1. Probably part of a signaling complex that may contain SH3RF1, MAPK8IP, DLK1, MAP2K4/MKK4, MAP2K7/MKK7, MAPK8/JNK1, MAPK9/JNK2, AKT1 and AKT2. Found in a complex with RAC2, MAP3K7/TAK1, MAP2K7/MKK7, MAPK8IP1/JIP1, MAPK8/JNK1 and MAPK9/JNK2. Found in a complex with RAC1, MAP3K11/MLK3, MAP2K7/MKK7, MAPK8IP1/JIP1 and MAPK8/JNK1. Interacts with SH3RF2. Phosphorylated at Ser-305 by AKT1 and AKT2. When phosphorylated, it has reduced ability to bind Rac. In terms of processing, autoubiquitinated. Ubiquitinated by SH3RF2, leading to proteasome-mediated degradation.

It is found in the cytoplasm. The protein resides in the perinuclear region. The protein localises to the cell projection. Its subcellular location is the lamellipodium. It localises to the golgi apparatus. It is found in the trans-Golgi network. It catalyses the reaction S-ubiquitinyl-[E2 ubiquitin-conjugating enzyme]-L-cysteine + [acceptor protein]-L-lysine = [E2 ubiquitin-conjugating enzyme]-L-cysteine + N(6)-ubiquitinyl-[acceptor protein]-L-lysine.. Its pathway is protein modification; protein ubiquitination. Functionally, has E3 ubiquitin-protein ligase activity. In the absence of an external substrate, it can catalyze self-ubiquitination. Stimulates ubiquitination of potassium channel KCNJ1, enhancing it's dynamin-dependent and clathrin-independent endocytosis. Acts as a scaffold protein that coordinates with MAPK8IP1/JIP1 in organizing different components of the JNK pathway, including RAC1 or RAC2, MAP3K11/MLK3 or MAP3K7/TAK1, MAP2K7/MKK7, MAPK8/JNK1 and/or MAPK9/JNK2 into a functional multiprotein complex to ensure the effective activation of the JNK signaling pathway. Regulates the differentiation of CD4(+) and CD8(+) T-cells and promotes T-helper 1 (Th1) cell differentiation. Regulates the activation of MAPK8/JNK1 and MAPK9/JNK2 in CD4(+) T-cells and the activation of MAPK8/JNK1 in CD8(+) T-cells. Plays a crucial role in the migration of neocortical neurons in the developing brain. Controls proper cortical neuronal migration and the formation of proximal cytoplasmic dilation in the leading process (PCDLP) in migratory neocortical neurons by regulating the proper localization of activated RAC1 and F-actin assembly. This is E3 ubiquitin-protein ligase SH3RF1 (Sh3rf1) from Rattus norvegicus (Rat).